The chain runs to 227 residues: MQFTTFALLAVAAATASAQAPQAYYGQGAKSAQVHTFETRKAVPTRVAEVYGEHEQERVTKTKVYHALVTEEAQHHGEEHKAAPYKAYKVYSVASSYSAQPRATHAAEHYGEGKKADHYAEPAKAVHADPHHVDPVKARPTMAATEMKQPEKEAPSTVCAKGSEISCCTTDSSNSGALGNVLGGSCLLQNLSLLSLNSNCAAANTFCCPTTQEGTLNINLSCIPISL.

The first 18 residues, 1 to 18, serve as a signal peptide directing secretion; it reads MQFTTFALLAVAAATASA. 4 disulfides stabilise this stretch: C159/C207, C167/C200, C168/C186, and C208/C222. N-linked (GlcNAc...) asparagine glycans are attached at residues N190 and N219.

It belongs to the fungal hydrophobin family. As to quaternary structure, self-assembles to form functional amyloid fibrils called rodlets. Self-assembly into fibrillar rodlets occurs spontaneously at hydrophobic:hydrophilic interfaces and the rodlets further associate laterally to form amphipathic monolayers. In terms of tissue distribution, expressed in conidia and aerial hyphae.

It is found in the secreted. The protein resides in the cell wall. In terms of biological role, aerial growth, conidiation, and dispersal of filamentous fungi in the environment rely upon a capability of their secreting small amphipathic proteins called hydrophobins (HPBs) with low sequence identity. Class I can self-assemble into an outermost layer of rodlet bundles on aerial cell surfaces, conferring cellular hydrophobicity that supports fungal growth, development and dispersal; whereas Class II form highly ordered films at water-air interfaces through intermolecular interactions but contribute nothing to the rodlet structure. Hcf-4 is a class I hydrophobin that is involved in the development and germination of conidia. This Passalora fulva (Tomato leaf mold) protein is Class I hydrophobin 4.